We begin with the raw amino-acid sequence, 82 residues long: uncharacterized protein (82 aa).

The disordered stretch occupies residues 60-82 (YKRRRPDHMMKRNSPSYTGDHKT).

This is an uncharacterized protein from Saccharomyces cerevisiae (strain ATCC 204508 / S288c) (Baker's yeast).